The following is a 149-amino-acid chain: Arginine repressor (149 aa).

It belongs to the ArgR family.

It is found in the cytoplasm. Its pathway is amino-acid biosynthesis; L-arginine biosynthesis [regulation]. Functionally, regulates arginine biosynthesis genes. This Bacillus cereus (strain ATCC 10987 / NRS 248) protein is Arginine repressor.